A 257-amino-acid polypeptide reads, in one-letter code: Acetylglutamate kinase (257 aa).

Substrate is bound by residues 43–44 (GG), Arg-65, and Asn-157. ATP contacts are provided by residues 180–185 (DVSGIL) and 208–210 (IIT).

It belongs to the acetylglutamate kinase family. ArgB subfamily. Homodimer.

The protein localises to the cytoplasm. It catalyses the reaction N-acetyl-L-glutamate + ATP = N-acetyl-L-glutamyl 5-phosphate + ADP. Its pathway is amino-acid biosynthesis; L-arginine biosynthesis; N(2)-acetyl-L-ornithine from L-glutamate: step 2/4. Its function is as follows. Catalyzes the ATP-dependent phosphorylation of N-acetyl-L-glutamate. The chain is Acetylglutamate kinase from Serratia proteamaculans (strain 568).